A 63-amino-acid chain; its full sequence is MRYTFGIVTVYLLAGCAGSPPKPPEVKGKYRPINRVEAPASAGRNPVNSLNALCGNLNEKQCR.

The signal sequence occupies residues 1 to 15; it reads MRYTFGIVTVYLLAG. Residue C16 is the site of N-palmitoyl cysteine attachment. C16 is lipidated: S-diacylglycerol cysteine.

It to B.suis ORF12 in VirB region.

The protein resides in the cell inner membrane. In Xylella fastidiosa (strain 9a5c), this protein is Putative conjugal transfer lipoprotein XF_a0011.1.